A 517-amino-acid polypeptide reads, in one-letter code: Crotonobetaine/carnitine--CoA ligase (517 aa).

Belongs to the ATP-dependent AMP-binding enzyme family.

It catalyses the reaction 4-(trimethylamino)butanoate + ATP + CoA = 4-(trimethylamino)butanoyl-CoA + AMP + diphosphate. The catalysed reaction is crotonobetaine + ATP + CoA = crotonobetainyl-CoA + AMP + diphosphate. It carries out the reaction (R)-carnitine + ATP + CoA = (R)-carnitinyl-CoA + AMP + diphosphate. It participates in amine and polyamine metabolism; carnitine metabolism. In terms of biological role, catalyzes the transfer of CoA to carnitine, generating the initial carnitinyl-CoA needed for the CaiB reaction cycle. Also has activity toward crotonobetaine and gamma-butyrobetaine. This chain is Crotonobetaine/carnitine--CoA ligase, found in Escherichia coli O139:H28 (strain E24377A / ETEC).